A 170-amino-acid polypeptide reads, in one-letter code: MEVIIKAKVKPTEDKYKVKKAILNIFPKAKLTFIEKDNEFGEWEGKTKSVEKLKELLRSQSILDAARMVLEKGMTENATKFYLNKQAAYVGAVNFDIDTHGGIFVKILADENEDIMKIIKDIAPRTKGGVIINEDELEEEEEKEDSEEIKEGHKEENNLKIKVIDNSSGD.

Residues 133–148 (NEDELEEEEEKEDSEE) are compositionally biased toward acidic residues. A disordered region spans residues 133 to 170 (NEDELEEEEEKEDSEEIKEGHKEENNLKIKVIDNSSGD). The segment covering 149 to 163 (IKEGHKEENNLKIKV) has biased composition (basic and acidic residues).

This sequence belongs to the UPF0201 family.

The protein is UPF0201 protein MJ1564 of Methanocaldococcus jannaschii (strain ATCC 43067 / DSM 2661 / JAL-1 / JCM 10045 / NBRC 100440) (Methanococcus jannaschii).